A 509-amino-acid chain; its full sequence is GMP synthase [glutamine-hydrolyzing] (509 aa).

Positions 4-193 constitute a Glutamine amidotransferase type-1 domain; sequence NVLILDFGSQ…LIKIAGTKAT (190 aa). Residue Cys79 is the Nucleophile of the active site. Active-site residues include His167 and Glu169. One can recognise a GMPS ATP-PPase domain in the interval 194–384; sequence WTPGKFVDLT…LGIDKELLGR (191 aa). 221 to 227 contributes to the ATP binding site; sequence SGGVDST.

As to quaternary structure, homodimer.

The enzyme catalyses XMP + L-glutamine + ATP + H2O = GMP + L-glutamate + AMP + diphosphate + 2 H(+). Its pathway is purine metabolism; GMP biosynthesis; GMP from XMP (L-Gln route): step 1/1. In terms of biological role, catalyzes the synthesis of GMP from XMP. In Christiangramia forsetii (strain DSM 17595 / CGMCC 1.15422 / KT0803) (Gramella forsetii), this protein is GMP synthase [glutamine-hydrolyzing].